The primary structure comprises 285 residues: 4-hydroxybenzoate octaprenyltransferase (285 aa).

7 consecutive transmembrane segments (helical) span residues 20–37 (IGIY…WLAA), 96–116 (FFFV…PFTI), 138–158 (WPQA…FAAI), 166–186 (AWVI…AYAV), 211–231 (IIGF…DLFG), 234–254 (WLYY…QYLL), and 262–282 (AFKA…GIML).

It belongs to the UbiA prenyltransferase family. The cofactor is Mg(2+).

The protein resides in the cell inner membrane. It catalyses the reaction all-trans-octaprenyl diphosphate + 4-hydroxybenzoate = 4-hydroxy-3-(all-trans-octaprenyl)benzoate + diphosphate. It functions in the pathway cofactor biosynthesis; ubiquinone biosynthesis. Its function is as follows. Catalyzes the prenylation of para-hydroxybenzoate (PHB) with an all-trans polyprenyl group. Mediates the second step in the final reaction sequence of ubiquinone-8 (UQ-8) biosynthesis, which is the condensation of the polyisoprenoid side chain with PHB, generating the first membrane-bound Q intermediate 3-octaprenyl-4-hydroxybenzoate. This is 4-hydroxybenzoate octaprenyltransferase from Hydrogenovibrio crunogenus (strain DSM 25203 / XCL-2) (Thiomicrospira crunogena).